We begin with the raw amino-acid sequence, 490 residues long: MNWSNTPSFLEKQRQRLKRYQFQIKVSEQGRVVSVGDGIIWIKGLPGAAIDEILISEDECCIAMVFHLTEELVGAVMLVQTKKLKAGTPIFPLKRVLSIPVGDKLLGRVIDPLGHPLDGGEIPPHEEQGLLDRLSPHILHRDFVNRPLYTGNKMLDNLIPIGKGQRELLIGDNGLGKSALALDIVMNQKDKKVYCVYVLIGQKRSTVSSTIQLLKKANALDYTTVVVAQATALPGLLYLAPFAGCAIAEHWMKKGLDTLVVYDDLSAHANSYRELSLLLRRPPGREAFPADIFYLHSRLLERSTCLSPAMGGGSMTALPIIETKEGEMATYIPTNLISITDGQIFFDESLFSSGFLPAIDITKSVSRVGAKAQHPQIKKESGRMKLDYLQFLDLELFTRFGAKLDAKMQKQIQKGRVLREILKQERFSPLPIEFQLAWLIAYNEGFFDESNLEDIPQILKKIEKEIKQSNLSLGSPREQWKKAIKEWLMA.

171-178 lines the ATP pocket; the sequence is GDNGLGKS.

It belongs to the ATPase alpha/beta chains family. As to quaternary structure, F-type ATPases have 2 components, CF(1) - the catalytic core - and CF(0) - the membrane proton channel. CF(1) has five subunits: alpha(3), beta(3), gamma(1), delta(1), epsilon(1). CF(0) has three main subunits: a(1), b(2) and c(9-12). The alpha and beta chains form an alternating ring which encloses part of the gamma chain. CF(1) is attached to CF(0) by a central stalk formed by the gamma and epsilon chains, while a peripheral stalk is formed by the delta and b chains.

The protein localises to the cell inner membrane. It catalyses the reaction ATP + H2O + 4 H(+)(in) = ADP + phosphate + 5 H(+)(out). Functionally, produces ATP from ADP in the presence of a proton gradient across the membrane. The alpha chain is a regulatory subunit. The sequence is that of ATP synthase subunit alpha 1 from Legionella pneumophila (strain Corby).